The chain runs to 457 residues: Choline kinase alpha (457 aa).

A disordered region spans residues 1 to 86 (MKTKFCTGGE…PPADEQPEPR (86 aa)). Residues 13-32 (PSPLGLLLSCGSGSAAPAPG) are compositionally biased toward low complexity. Over residues 55-80 (LALPPPPPLPLPLPLPQPPPPQPPAD) the composition is skewed to pro residues. ATP is bound by residues 117–123 (RGGLSNM), Arg146, and 207–213 (QFIPSRR). A phosphocholine-binding site is contributed by 119 to 121 (GLS). Lys247 carries the N6-acetyllysine modification. Ser279 is subject to Phosphoserine. ATP is bound by residues Gln308 and Asp330.

Belongs to the choline/ethanolamine kinase family. In terms of assembly, homodimer. Heterodimer with CHKB. As to quaternary structure, monomer; acetylation by KAT5 promotes dissociation of the homodimer and monomerization. (Microbial infection) Interacts with PI4KA/PI4KIIIalpha; CHKA bridges PI4KA/PI4KIIIalpha and hepatitis C virus (HCV) non-structural protein 5A (NS5A) and potentiates NS5A-stimulated PI4KA activity, which then facilitates the targeting of the ternary complex to the ER for viral replication. Post-translationally, phosphorylated at Ser-279 by AMPK in response to glucose deprivation, leading to localization to lipid droplets. Acetylated by KAT5 at Lys-247 following phosphorylation by AMPK, leading to monomerization and conversion into a tyrosine-protein kinase.

It localises to the cytoplasm. It is found in the cytosol. Its subcellular location is the lipid droplet. It carries out the reaction choline + ATP = phosphocholine + ADP + H(+). The catalysed reaction is ethanolamine + ATP = phosphoethanolamine + ADP + H(+). It catalyses the reaction L-tyrosyl-[protein] + ATP = O-phospho-L-tyrosyl-[protein] + ADP + H(+). It participates in phospholipid metabolism; phosphatidylcholine biosynthesis; phosphocholine from choline: step 1/1. The protein operates within phospholipid metabolism; phosphatidylethanolamine biosynthesis; phosphatidylethanolamine from ethanolamine: step 1/3. With respect to regulation, homodimerization or heterodimerization is required for the choline and ethanolamine kinase activities. Plays a key role in phospholipid biosynthesis by catalyzing the phosphorylation of free choline to phosphocholine, the first step in phosphatidylcholine biosynthesis. Also phosphorylates ethanolamine, thereby contributing to phosphatidylethanolamine biosynthesis. Has higher activity with choline. May contribute to tumor cell growth. Its function is as follows. This isoform plays a key role in lipolysis of lipid droplets following glucose deprivation. In response to glucose deprivation, phosphorylated by AMPK, promoting localization to lipid droplets. Phosphorylation is followed by acetylation by KAT5, leading to dissociation of the homodimer into a monomer. Monomeric CHKA isoform 1 is converted into a tyrosine-protein kinase, which phosphorylates lipid droplet structural proteins PLIN2 and PLIN3, leading to lipolysis of lipid droplets. This Homo sapiens (Human) protein is Choline kinase alpha (CHKA).